The primary structure comprises 314 residues: Ornithine carbamoyltransferase (314 aa).

Residues 58–61 (STRT), Q85, R109, and 136–139 (HPAQ) each bind carbamoyl phosphate. L-ornithine-binding positions include N169, D233, and 237-238 (SM). Carbamoyl phosphate contacts are provided by residues 273–274 (CL) and R301.

It belongs to the aspartate/ornithine carbamoyltransferase superfamily. OTCase family.

It localises to the cytoplasm. It catalyses the reaction carbamoyl phosphate + L-ornithine = L-citrulline + phosphate + H(+). Its pathway is amino-acid degradation; L-arginine degradation via ADI pathway; carbamoyl phosphate from L-arginine: step 2/2. Reversibly catalyzes the transfer of the carbamoyl group from carbamoyl phosphate (CP) to the N(epsilon) atom of ornithine (ORN) to produce L-citrulline. The chain is Ornithine carbamoyltransferase from Staphylothermus marinus (strain ATCC 43588 / DSM 3639 / JCM 9404 / F1).